Here is a 355-residue protein sequence, read N- to C-terminus: MSGQPKRLMVMAGGTGGHVFPGLAVAHHLMAQGWQVRWLGTADRMEADLVPKHGIDIDFIRISGLRGKGVKALLAAPLRIFNAWRQARAIMKRFKPDVVLGMGGYVSGPGGLAAWSLGIPVVLHEQNGIAGLTNQWLAKIATTVMQAFPGAFPNAEVVGNPVRTDVLALPLPQVRLAGRDGPIRVLVVGGSQGARVLNQTMPQVAARLGDTVTIWHQSGKGAQLTVEQAYAGAGQPQHKVTEFIDDMAAAYAWADVVVCRSGALTVSEIAAAGLPAIFVPFQHKDRQQYWNALPLENAGAAKIFEQPQFTVEAVADTLAGWSREALLTMAERARAVSIPDATERVASEVSRVART.

UDP-N-acetyl-alpha-D-glucosamine is bound by residues 15–17, N127, R163, S191, I244, 263–268, and Q288; these read TGG and ALTVSE.

The protein belongs to the glycosyltransferase 28 family. MurG subfamily.

It is found in the cell inner membrane. The catalysed reaction is di-trans,octa-cis-undecaprenyl diphospho-N-acetyl-alpha-D-muramoyl-L-alanyl-D-glutamyl-meso-2,6-diaminopimeloyl-D-alanyl-D-alanine + UDP-N-acetyl-alpha-D-glucosamine = di-trans,octa-cis-undecaprenyl diphospho-[N-acetyl-alpha-D-glucosaminyl-(1-&gt;4)]-N-acetyl-alpha-D-muramoyl-L-alanyl-D-glutamyl-meso-2,6-diaminopimeloyl-D-alanyl-D-alanine + UDP + H(+). The protein operates within cell wall biogenesis; peptidoglycan biosynthesis. Functionally, cell wall formation. Catalyzes the transfer of a GlcNAc subunit on undecaprenyl-pyrophosphoryl-MurNAc-pentapeptide (lipid intermediate I) to form undecaprenyl-pyrophosphoryl-MurNAc-(pentapeptide)GlcNAc (lipid intermediate II). The sequence is that of UDP-N-acetylglucosamine--N-acetylmuramyl-(pentapeptide) pyrophosphoryl-undecaprenol N-acetylglucosamine transferase from Salmonella paratyphi B (strain ATCC BAA-1250 / SPB7).